Consider the following 499-residue polypeptide: Glucooligosaccharide oxidase (499 aa).

The N-terminal stretch at 1–25 (MVRIQELTAALSLASVVQASWIQKR) is a signal peptide. C31 and C80 are disulfide-bonded. Positions 58-230 (VDYDPAAIAI…SEFEFNTFEA (173 aa)) constitute an FAD-binding PCMH-type domain. Positions 95-155 (HSYGSYGFGG…GNRALSHGTC (61 aa)) form a cross-link, 6-(S-cysteinyl)-8alpha-(pros-histidyl)-FAD (His-Cys). Substrate is bound by residues Y97, T154, and R270. N-linked (GlcNAc...) asparagine glycosylation is found at N330 and N366. Positions 378 and 409 each coordinate substrate. An N-linked (GlcNAc...) asparagine glycan is attached at N419. Y454 provides a ligand contact to substrate. Y454 functions as the Proton acceptor in the catalytic mechanism.

It belongs to the oxygen-dependent FAD-linked oxidoreductase family. Requires FAD as cofactor. In terms of processing, the FAD cofactor is bound via a bicovalent 6-S-cysteinyl, 8alpha-N1-histidyl FAD linkage.

The protein localises to the secreted. It catalyses the reaction beta-lactose + O2 = lactobiono-1,5-lactone + H2O2. It carries out the reaction D-cellobiose + O2 = D-cellobiono-1,5-lactone + H2O2. The catalysed reaction is D-cellotriose + O2 = D-cellotriono-1,5-lactone + H2O2. The enzyme catalyses D-cellotetraose + O2 = D-cellotetraono-1,5-lactone + H2O2. It catalyses the reaction D-cellopentaose + O2 = D-cellopentaono-1,5-lactone + H2O2. It carries out the reaction D-cellohexaose + O2 = D-cellohexaono-1,5-lactone + H2O2. Catalyzes the selective oxidation of C1 hydroxyl moieties on mono- and disaccharides with concomitant reduction of molecular oxygen to hydrogen peroxide. This results in the formation of the corresponding lactones, which typically undergo spontaneous hydrolysis. Glucooligosaccharide oxidase is able to oxidize the monosaccharide D-glucose as well as the disaccharides maltose, cellobiose, and lactose. In addition, it shows high selectivity for cello- and maltooligosaccharides, indicating that glucooligosaccharide oxidase prefers oligosaccharides with a beta-D-glucosyl unit on the reducing end and additional sugar units linked by alpha- or beta-1,4 glucosidic bonds. The sequence is that of Glucooligosaccharide oxidase (gluO) from Sarocladium strictum (Black bundle disease fungus).